Here is a 161-residue protein sequence, read N- to C-terminus: C-type lectin lectoxin-Lio3 (161 aa).

A signal peptide spans 1–23 (MRRFIFMSLGLLVLAFSLSGIGA). 3 disulfides stabilise this stretch: cysteine 27/cysteine 38, cysteine 55/cysteine 154, and cysteine 129/cysteine 146. A C-type lectin domain is found at 34–155 (HNISCYKLFT…CGLLHYFICQ (122 aa)). N-linked (GlcNAc...) asparagine glycosylation occurs at asparagine 35. Residues 117 to 119 (KGE) carry the Mannose-binding motif. Residues glutamate 127, asparagine 142, and aspartate 143 each contribute to the Ca(2+) site.

It belongs to the true venom lectin family. As to expression, expressed by the venom gland.

The protein resides in the secreted. Its function is as follows. Mannose-binding lectin which recognizes specific carbohydrate structures and agglutinates a variety of animal cells by binding to cell-surface glycoproteins and glycolipids. May be a calcium-dependent lectin. This is C-type lectin lectoxin-Lio3 from Erythrolamprus poecilogyrus (Water snake).